We begin with the raw amino-acid sequence, 496 residues long: Cytochrome P450 71D179 (496 aa).

Residues 1–21 form a helical; Signal-anchor for type II membrane protein membrane-spanning segment; that stretch reads MDISISWVVIIVSVLSYLILM. Heme is bound at residue Cys-435.

The protein belongs to the cytochrome P450 family. Heme serves as cofactor.

It localises to the membrane. Its pathway is secondary metabolite biosynthesis; terpenoid biosynthesis. Functionally, involved in the biosynthesis of phenolic monoterpenes natural products thymol and carvacrol which have a broad range of biological activities acting as antimicrobial compounds, insecticides, antioxidants and pharmaceutical agents. Catalyzes probably the C3-hydroxylation of gamma-terpinene to produce thymol. In Thymus vulgaris (Thyme), this protein is Cytochrome P450 71D179.